Here is a 321-residue protein sequence, read N- to C-terminus: Lipoyl synthase (321 aa).

C68, C73, C79, C94, C98, C101, and S308 together coordinate [4Fe-4S] cluster. One can recognise a Radical SAM core domain in the interval F80–T297.

Belongs to the radical SAM superfamily. Lipoyl synthase family. It depends on [4Fe-4S] cluster as a cofactor.

It localises to the cytoplasm. The catalysed reaction is [[Fe-S] cluster scaffold protein carrying a second [4Fe-4S](2+) cluster] + N(6)-octanoyl-L-lysyl-[protein] + 2 oxidized [2Fe-2S]-[ferredoxin] + 2 S-adenosyl-L-methionine + 4 H(+) = [[Fe-S] cluster scaffold protein] + N(6)-[(R)-dihydrolipoyl]-L-lysyl-[protein] + 4 Fe(3+) + 2 hydrogen sulfide + 2 5'-deoxyadenosine + 2 L-methionine + 2 reduced [2Fe-2S]-[ferredoxin]. Its pathway is protein modification; protein lipoylation via endogenous pathway; protein N(6)-(lipoyl)lysine from octanoyl-[acyl-carrier-protein]: step 2/2. Its function is as follows. Catalyzes the radical-mediated insertion of two sulfur atoms into the C-6 and C-8 positions of the octanoyl moiety bound to the lipoyl domains of lipoate-dependent enzymes, thereby converting the octanoylated domains into lipoylated derivatives. This is Lipoyl synthase from Yersinia enterocolitica serotype O:8 / biotype 1B (strain NCTC 13174 / 8081).